The primary structure comprises 156 residues: Biotin carboxyl carrier protein of acetyl-CoA carboxylase (156 aa).

One can recognise a Biotinyl-binding domain in the interval 73-156 (PAAAEISGHI…EFDEPLVVIE (84 aa)). Residue Lys122 is modified to N6-biotinyllysine.

Homodimer.

The protein operates within lipid metabolism; fatty acid biosynthesis. Functionally, this protein is a component of the acetyl coenzyme A carboxylase complex; first, biotin carboxylase catalyzes the carboxylation of the carrier protein and then the transcarboxylase transfers the carboxyl group to form malonyl-CoA. This Escherichia coli O6:H1 (strain CFT073 / ATCC 700928 / UPEC) protein is Biotin carboxyl carrier protein of acetyl-CoA carboxylase (accB).